We begin with the raw amino-acid sequence, 65 residues long: Large ribosomal subunit protein bL35 (65 aa).

Residues methionine 1 to glutamine 15 are compositionally biased toward basic residues. Positions methionine 1–alanine 27 are disordered.

It belongs to the bacterial ribosomal protein bL35 family.

In Bordetella petrii (strain ATCC BAA-461 / DSM 12804 / CCUG 43448), this protein is Large ribosomal subunit protein bL35.